Here is a 160-residue protein sequence, read N- to C-terminus: Small ribosomal subunit protein uS9 (160 aa).

Belongs to the universal ribosomal protein uS9 family.

The protein is Small ribosomal subunit protein uS9 of Rhodopseudomonas palustris (strain ATCC BAA-98 / CGA009).